A 242-amino-acid chain; its full sequence is Megakaryocyte and platelet inhibitory receptor G6b (242 aa).

The signal sequence occupies residues 1 to 17; it reads MALVLPLLPLLLSKVQG. N-linked (GlcNAc...) asparagine glycosylation is found at Asn-32 and Asn-112. Residues 141 to 161 traverse the membrane as a helical segment; that stretch reads VLIPLLGVGLVLGLGVAGVVW. 2 short sequence motifs (ITIM motif) span residues 210–215 and 236–241; these read LHYADL and TVYAVV. A Phosphotyrosine modification is found at Tyr-212.

Interacts (via ITIM motif) with PTPN6 and PTPN11. Binds to heparin. Post-translationally, N-glycosylated. In terms of processing, may be O-glycosylated. Phosphorylated. In terms of tissue distribution, expressed in mature megakaryocytes and platelets. Not expressed by immature megakaryocytes.

It is found in the cell membrane. Functionally, inhibitory receptor that acts as a critical regulator of hematopoietic lineage differentiation, megakaryocyte function and platelet production. Inhibits platelet aggregation and activation by agonists such as ADP and collagen-related peptide. This regulation of megakaryocate function as well as platelet production ann activation is done through the inhibition (via the 2 ITIM motifs) of the receptors CLEC1B and GP6:FcRgamma signaling. Appears to operate in a calcium-independent manner. The protein is Megakaryocyte and platelet inhibitory receptor G6b of Mus musculus (Mouse).